Reading from the N-terminus, the 284-residue chain is L-ribulose-5-phosphate 3-epimerase UlaE (284 aa).

It belongs to the L-ribulose-5-phosphate 3-epimerase family.

The enzyme catalyses L-ribulose 5-phosphate = L-xylulose 5-phosphate. The protein operates within cofactor degradation; L-ascorbate degradation; D-xylulose 5-phosphate from L-ascorbate: step 3/4. In terms of biological role, catalyzes the isomerization of L-xylulose-5-phosphate to L-ribulose-5-phosphate. Is involved in the anaerobic L-ascorbate utilization. In Shigella flexneri, this protein is L-ribulose-5-phosphate 3-epimerase UlaE.